Here is a 168-residue protein sequence, read N- to C-terminus: Large ribosomal subunit protein uL10 (168 aa).

It belongs to the universal ribosomal protein uL10 family. In terms of assembly, part of the ribosomal stalk of the 50S ribosomal subunit. The N-terminus interacts with L11 and the large rRNA to form the base of the stalk. The C-terminus forms an elongated spine to which L12 dimers bind in a sequential fashion forming a multimeric L10(L12)X complex.

Its function is as follows. Forms part of the ribosomal stalk, playing a central role in the interaction of the ribosome with GTP-bound translation factors. The polypeptide is Large ribosomal subunit protein uL10 (Photorhabdus laumondii subsp. laumondii (strain DSM 15139 / CIP 105565 / TT01) (Photorhabdus luminescens subsp. laumondii)).